The sequence spans 384 residues: Outer membrane protein assembly factor BamB (384 aa).

Residues 1–16 (MKIRILVLILCALTQG) form the signal peptide. A lipid anchor (N-palmitoyl cysteine) is attached at cysteine 17. The S-diacylglycerol cysteine moiety is linked to residue cysteine 17.

The protein belongs to the BamB family. As to quaternary structure, part of the Bam complex.

The protein localises to the cell outer membrane. Part of the outer membrane protein assembly complex, which is involved in assembly and insertion of beta-barrel proteins into the outer membrane. This Legionella pneumophila (strain Paris) protein is Outer membrane protein assembly factor BamB.